Consider the following 394-residue polypeptide: MVNDPPVPALLWAQEMGHVMAGRARKLLLQFGVFFCTILLLLWVSVFLYGSFYYSYMPTVSHLSPVHFHYRTDCESSTSLLCSFPVANVTLAKGGRDRVLMYGQPYRVTLELELPESPVNQDLGMFLVTISCYTRGGRIISTSSRSVMLHYRSSLLQMLDTLVFSSLLLFGFAEQKQLLEVELYPEYRENSYVPTTGAIIEIHSKRIQMYGAYLRIHAHFTGLRYLLYNFPMTCAFVGVASNFTFLSVIVLFSYMQWVWGGIWPRQRLSLQVNIRNRKRSRKDIQRKVSAHQPGPQGQEESPQLSPVTEDGESHADPSGTEGQLSEEEKTEQQPLSGEEELEPEASDGSGSWEDAALLTEANLAASGSAPAPETVGSSEPSAGSVRQRPICSSS.

The Cytoplasmic segment spans residues 1–27; the sequence is MVNDPPVPALLWAQEMGHVMAGRARKL. A helical transmembrane segment spans residues 28-48; it reads LLQFGVFFCTILLLLWVSVFL. Over 49–242 the chain is Lumenal; the sequence is YGSFYYSYMP…TCAFVGVASN (194 aa). Residues Asn-88 and Asn-242 are each glycosylated (N-linked (GlcNAc...) asparagine). Residues 243-263 form a helical membrane-spanning segment; sequence FTFLSVIVLFSYMQWVWGGIW. Residues 264-394 are Cytoplasmic-facing; the sequence is PRQRLSLQVN…VRQRPICSSS (131 aa). Residues 281–394 are disordered; the sequence is RKDIQRKVSA…VRQRPICSSS (114 aa). At Ser-289 the chain carries Phosphoserine. Residues 292-303 are compositionally biased toward low complexity; that stretch reads QPGPQGQEESPQ. 2 positions are modified to phosphoserine: Ser-346 and Ser-351.

This sequence belongs to the seipin family. As to quaternary structure, undecamer (an oligomer having eleven subunits). Oligomerization is important for its function in lipid droplet formation. Interacts with LDAF1 to form an oligomeric complex. Interacts with RAB18. Interacts with ZFYVE1 in a RAB18-dependent manner.

Its subcellular location is the endoplasmic reticulum membrane. The protein resides in the lipid droplet. In terms of biological role, plays a crucial role in the formation of lipid droplets (LDs) which are storage organelles at the center of lipid and energy homeostasis. In association with LDAF1, defines the sites of LD formation in the ER. Also required for growth and maturation of small nascent LDs into larger mature LDs. Mediates the formation and/or stabilization of endoplasmic reticulum-lipid droplets (ER-LD) contacts, facilitating protein and lipid delivery from the ER into growing LDs. Regulates the maturation of ZFYVE1-positive nascent LDs and the function of the RAB18-ZFYVE1 complex in mediating the formation of ER-LD contacts. Binds anionic phospholipids including phosphatidic acid. Plays an important role in the differentiation and development of adipocytes. In Bos taurus (Bovine), this protein is Seipin.